The chain runs to 371 residues: N-acetyldiaminopimelate deacetylase (371 aa).

Residue aspartate 68 is part of the active site. The active-site Proton acceptor is glutamate 127.

It belongs to the peptidase M20A family. N-acetyldiaminopimelate deacetylase subfamily.

It carries out the reaction N-acetyl-(2S,6S)-2,6-diaminopimelate + H2O = (2S,6S)-2,6-diaminopimelate + acetate. It participates in amino-acid biosynthesis; L-lysine biosynthesis via DAP pathway; LL-2,6-diaminopimelate from (S)-tetrahydrodipicolinate (acetylase route): step 3/3. Catalyzes the conversion of N-acetyl-diaminopimelate to diaminopimelate and acetate. This is N-acetyldiaminopimelate deacetylase from Oceanobacillus iheyensis (strain DSM 14371 / CIP 107618 / JCM 11309 / KCTC 3954 / HTE831).